Here is a 1113-residue protein sequence, read N- to C-terminus: Carbamoyl phosphate synthase arginine-specific large chain (1113 aa).

A carboxyphosphate synthetic domain region spans residues 23 to 420 (QLIKGIDSVL…AFQKAFRQVD (398 aa)). ATP contacts are provided by Arg150, Arg190, Gly196, Gly197, Lys227, Leu229, Glu234, Gly260, Ile261, His262, Gln303, and Glu317. Residues 154 to 346 (ARALKEINMP…LAYTAAKIAL (193 aa)) form the ATP-grasp 1 domain. The Mg(2+) site is built by Gln303, Glu317, and Asn319. The Mn(2+) site is built by Gln303, Glu317, and Asn319. The oligomerization domain stretch occupies residues 421–568 (PSLLGFQGSD…YVTYNAVKDD (148 aa)). Residues 569–955 (VTFGDNGIMV…SYWVALQGLM (387 aa)) form a carbamoyl phosphate synthetic domain region. Positions 693–888 (STILDTLGLD…FVEIAVKAFL (196 aa)) constitute an ATP-grasp 2 domain. 10 residues coordinate ATP: Arg729, Lys768, Ile770, Glu775, Gly800, Val801, His802, Ser803, Gln843, and Glu859. Gln843, Glu859, and Asn861 together coordinate Mg(2+). Mn(2+) is bound by residues Gln843, Glu859, and Asn861. The segment at 956-1097 (SFCVPLPPSG…EMRQSDGPET (142 aa)) is allosteric domain. The 157-residue stretch at 957 to 1113 (FCVPLPPSGI…WREYLGFKPT (157 aa)) folds into the MGS-like domain.

Belongs to the CarB family. Heterodimer composed of 2 chains; the small (or glutamine) chain promotes the hydrolysis of glutamine to ammonia, which is used by the large (or ammonia) chain to synthesize carbamoyl phosphate. Mg(2+) is required as a cofactor. It depends on Mn(2+) as a cofactor.

It localises to the cytoplasm. It carries out the reaction hydrogencarbonate + L-glutamine + 2 ATP + H2O = carbamoyl phosphate + L-glutamate + 2 ADP + phosphate + 2 H(+). The enzyme catalyses hydrogencarbonate + NH4(+) + 2 ATP = carbamoyl phosphate + 2 ADP + phosphate + 2 H(+). Its pathway is amino-acid biosynthesis; L-arginine biosynthesis; carbamoyl phosphate from bicarbonate: step 1/1. Large subunit of the arginine-specific carbamoyl phosphate synthase (CPSase). CPSase catalyzes the formation of carbamoyl phosphate from the ammonia moiety of glutamine, hydrogencarbonate, and phosphate donated by ATP, constituting the first step of 2 biosynthetic pathways, one leading to arginine and/or urea and the other to pyrimidine nucleotides. The large subunit (synthetase) binds the substrates ammonia (free or transferred from glutamine from the small subunit), hydrogencarbonate and ATP and carries out an ATP-coupled ligase reaction, activating hydrogencarbonate by forming carboxy phosphate which reacts with ammonia to form carbamoyl phosphate. The polypeptide is Carbamoyl phosphate synthase arginine-specific large chain (CPA2) (Eremothecium gossypii (strain ATCC 10895 / CBS 109.51 / FGSC 9923 / NRRL Y-1056) (Yeast)).